Consider the following 482-residue polypeptide: Zinc finger CCCH domain-containing protein 40 (482 aa).

The C3H1-type zinc finger occupies 157–184 (RNRAHVCSFYVRGECTRGAECPYRHEMP). An RRM domain is found at 228–301 (RTLYIGGLNN…IRLKLMWGKP (74 aa)). 2 stretches are compositionally biased toward low complexity: residues 329–347 (SQQQSGDQPQPPGMEGQQQ) and 389–428 (PGPQQAAQAQASSSSGQSYPMPPQYYHGQYPPYYPPYGGY). The tract at residues 329 to 482 (SQQQSGDQPQ…VPPPQQTTQN (154 aa)) is disordered. The segment covering 429 to 446 (MPPPRMPYPPPPQYPPYQ) has biased composition (pro residues). The span at 452-466 (PAQSQASSSQQPAPA) shows a compositional bias: low complexity. Residues 473-482 (VPPPQQTTQN) are compositionally biased toward pro residues.

The protein is Zinc finger CCCH domain-containing protein 40 of Oryza sativa subsp. japonica (Rice).